Here is a 4008-residue protein sequence, read N- to C-terminus: Extracellular matrix organizing protein FRAS1 (4008 aa).

The signal sequence occupies residues 1-26; sequence MGVLKVWLGLALALAEFAVLPHHSEG. 5 consecutive VWFC domains span residues 27–88, 93–153, 157–217, 219–279, and 283–343; these read ACVY…PECV, GSCH…PVCV, KPCS…PQCS, RSCS…EECV, and GSCS…PECI. At 27–3901 the chain is on the extracellular side; that stretch reads ACVYQDSLLA…AASLSQTGAS (3875 aa). Ser344 is modified (phosphoserine). The VWFC 6 domain maps to 347–417; sequence GYCVYEETGE…VKGQCCPDCT (71 aa). A glycan (N-linked (GlcNAc...) asparagine) is linked at Asn361. FU repeat units lie at residues 409–460, 462–505, 507–553, 555–599, 602–647, 649–705, 708–753, 755–800, 803–852, 854–900, 903–948, 952–997, 999–1042, and 1046–1089; these read KGQC…GFYQ, GSLC…GFYQ, RHSC…GFYN, QGTC…GYYA, TGRC…GFYS, HGVC…HFYL, TGIC…GYFH, EGSC…EQFL, VGYC…GYYA, RGAC…GHYL, NHVC…QYYL, TNTC…SFYQ, SGLC…GYFA, and KHKC…GFSV. An N-linked (GlcNAc...) asparagine glycan is attached at Asn728. Asn1093 and Asn1108 each carry an N-linked (GlcNAc...) asparagine glycan. CSPG repeat units lie at residues 1102-1197, 1217-1308, 1329-1438, 1463-1559, 1595-1689, 1710-1810, and 1833-1936; these read TPSL…LKIS, APYV…LQAN, GLQL…FEVS, APKV…FSFA, PVFQ…ISVT, GPRL…FSVS, and PPVI…FYVS. The N-linked (GlcNAc...) asparagine glycan is linked to Asn1504. The N-linked (GlcNAc...) asparagine glycan is linked to Asn1777. N-linked (GlcNAc...) asparagine glycans are attached at residues Asn1948 and Asn1978. CSPG repeat units follow at residues 1957–2057, 2078–2177, 2199–2291, 2311–2404, and 2439–2536; these read EPPR…FSLT, TPHL…FDVV, PPVI…FTLS, SLPV…FTVS, and TPRI…FLVK. 5 consecutive Calx-beta domains span residues 2543–2646, 2659–2770, 2784–2890, 2905–3007, and 3025–3129; these read VSDN…VELS, AKVI…IALA, AKVL…VFLS, IAIN…VYLG, and ATIT…LVLG. Residues Asn2563, Asn2664, and Asn2682 are each glycosylated (N-linked (GlcNAc...) asparagine). 6 N-linked (GlcNAc...) asparagine glycosylation sites follow: Asn2908, Asn2985, Asn3070, Asn3218, Asn3676, and Asn3875. The chain crosses the membrane as a helical span at residues 3902–3922; it reads IGSALAAIMLLLLVFLVACFI. Residues 3923–4008 lie on the Cytoplasmic side of the membrane; that stretch reads NRKCQKQRKK…HNNLQDGTEV (86 aa).

It belongs to the FRAS1 family. As to expression, expressed in many adult tissues, with highest levels in kidney, pancreas and thalamus. Relatively high expression was also detected in fetal kidney and heart.

It localises to the cell membrane. Its function is as follows. Involved in extracellular matrix organization. Required for the regulation of epidermal-basement membrane adhesion responsible for proper organogenesis during embryonic development. Involved in brain organization and function. The protein is Extracellular matrix organizing protein FRAS1 of Homo sapiens (Human).